A 370-amino-acid chain; its full sequence is Uroporphyrinogen decarboxylase (370 aa).

Residues 29–33, Asp79, Tyr155, Ser210, and His342 each bind substrate; that span reads RQAGR.

The protein belongs to the uroporphyrinogen decarboxylase family. Homodimer.

The protein localises to the cytoplasm. It catalyses the reaction uroporphyrinogen III + 4 H(+) = coproporphyrinogen III + 4 CO2. Its pathway is porphyrin-containing compound metabolism; protoporphyrin-IX biosynthesis; coproporphyrinogen-III from 5-aminolevulinate: step 4/4. Its function is as follows. Catalyzes the decarboxylation of four acetate groups of uroporphyrinogen-III to yield coproporphyrinogen-III. The protein is Uroporphyrinogen decarboxylase of Acidovorax sp. (strain JS42).